We begin with the raw amino-acid sequence, 628 residues long: Very-long-chain aldehyde decarbonylase GL1-2 (628 aa).

A run of 5 helical transmembrane segments spans residues 37–57 (GAAPVGSWWLHLLLLFAARGL), 131–151 (GWAIALLLHVLVAEPLFYWAH), 191–211 (VVIGVPLAGAFLMGVGSVGLV), 299–319 (DFVFLAHVVDIMASMHVPFVL), and 331–351 (FVLLPFWPVAFGFMLLMWCCS). A Fatty acid hydroxylase domain is found at 137-277 (LLHVLVAEPL…MPIFDLLGGT (141 aa)).

The protein belongs to the sterol desaturase family. Homodimer. In terms of tissue distribution, expressed in germinating seeds, radicals and leaves.

Its subcellular location is the endoplasmic reticulum membrane. It catalyses the reaction a long-chain fatty aldehyde + 2 NADPH + O2 + H(+) = a long-chain alkane + formate + 2 NADP(+) + H2O. In terms of biological role, aldehyde decarbonylase involved in the conversion of aldehydes to alkanes. Core component of a very-long-chain alkane synthesis complex. Required for the formation of wax layers conferring cuticular permeability and drought tolerance. In Oryza sativa subsp. japonica (Rice), this protein is Very-long-chain aldehyde decarbonylase GL1-2.